Here is a 120-residue protein sequence, read N- to C-terminus: Large ribosomal subunit protein uL18 (120 aa).

A disordered region spans residues 1-29 (MITKPNKNAGRKKRHAHVRRTLSGTPQRP). Residues 9–20 (AGRKKRHAHVRR) show a composition bias toward basic residues.

This sequence belongs to the universal ribosomal protein uL18 family. As to quaternary structure, part of the 50S ribosomal subunit; part of the 5S rRNA/L5/L18/L25 subcomplex. Contacts the 5S and 23S rRNAs.

Functionally, this is one of the proteins that bind and probably mediate the attachment of the 5S RNA into the large ribosomal subunit, where it forms part of the central protuberance. The sequence is that of Large ribosomal subunit protein uL18 from Shouchella clausii (strain KSM-K16) (Alkalihalobacillus clausii).